Consider the following 159-residue polypeptide: Early E3 18.5 kDa glycoprotein (159 aa).

The signal sequence occupies residues 1 to 17 (MRYMILGLLALAAVCSA). Residues 18-123 (AKKVEFKEPA…PPQKCLENTG (106 aa)) are Lumenal-facing. Disulfide bonds link cysteine 28–cysteine 45 and cysteine 39–cysteine 100. 2 N-linked (GlcNAc...) asparagine; by host glycosylation sites follow: asparagine 29 and asparagine 78. A helical transmembrane segment spans residues 124 to 144 (TFCSTALLITALALVCTLLYL). Residues 145-159 (KYKSRRSFIDEKKMP) are Cytoplasmic-facing. Positions 156–159 (KKMP) match the Di-lysine motif motif.

Belongs to the adenoviridae E19 family. Both disulfide bonds are absolutely critical for the interaction with MHC antigens. In terms of processing, N-glycosylated; high-mannose.

Its subcellular location is the host endoplasmic reticulum membrane. Its function is as follows. Binds and retains class I heavy chains in the endoplasmic reticulum during the early period of virus infection, thereby impairing their transport to the cell surface. Also delays the expression of class I alleles that it cannot affect by direct retention. Binds transporters associated with antigen processing (TAP) and acts as a tapasin inhibitor, preventing class I/TAP association. In consequence, infected cells are masked for immune recognition by cytotoxic T-lymphocytes. The protein is Early E3 18.5 kDa glycoprotein of Homo sapiens (Human).